A 105-amino-acid polypeptide reads, in one-letter code: Pyrimidine/purine nucleoside phosphorylase (105 aa).

This sequence belongs to the nucleoside phosphorylase PpnP family.

The enzyme catalyses a purine D-ribonucleoside + phosphate = a purine nucleobase + alpha-D-ribose 1-phosphate. It carries out the reaction adenosine + phosphate = alpha-D-ribose 1-phosphate + adenine. The catalysed reaction is cytidine + phosphate = cytosine + alpha-D-ribose 1-phosphate. It catalyses the reaction guanosine + phosphate = alpha-D-ribose 1-phosphate + guanine. The enzyme catalyses inosine + phosphate = alpha-D-ribose 1-phosphate + hypoxanthine. It carries out the reaction thymidine + phosphate = 2-deoxy-alpha-D-ribose 1-phosphate + thymine. The catalysed reaction is uridine + phosphate = alpha-D-ribose 1-phosphate + uracil. It catalyses the reaction xanthosine + phosphate = alpha-D-ribose 1-phosphate + xanthine. In terms of biological role, catalyzes the phosphorolysis of diverse nucleosides, yielding D-ribose 1-phosphate and the respective free bases. Can use uridine, adenosine, guanosine, cytidine, thymidine, inosine and xanthosine as substrates. Also catalyzes the reverse reactions. This chain is Pyrimidine/purine nucleoside phosphorylase, found in Anaeromyxobacter sp. (strain Fw109-5).